The sequence spans 64 residues: Small ribosomal subunit protein eS17 (64 aa).

The protein belongs to the eukaryotic ribosomal protein eS17 family.

The polypeptide is Small ribosomal subunit protein eS17 (Methanosarcina barkeri (strain Fusaro / DSM 804)).